The sequence spans 186 residues: uncharacterized protein (186 aa).

Positions T121–E146 are disordered.

The protein belongs to the chlamydial CPn_0422/CT_273/TC_0545 family.

This is an uncharacterized protein from Chlamydia muridarum (strain MoPn / Nigg).